The chain runs to 478 residues: Zinc metalloproteinase/disintegrin (478 aa).

Residues 1–20 (MIQVLLVTICLAAFPYQGSS) form the signal peptide. Residues 21–188 (IILESGNVND…PIKKVSQLNL (168 aa)) constitute a propeptide that is removed on maturation. In terms of domain architecture, Peptidase M12B spans 194 to 391 (RHVDIVVVVD…QNPQCILNKP (198 aa)). Cysteines 207 and 248 form a disulfide. Residue asparagine 279 is glycosylated (N-linked (GlcNAc...) (complex) asparagine). 3 disulfides stabilise this stretch: cysteine 305-cysteine 386, cysteine 345-cysteine 370, and cysteine 347-cysteine 353. Histidine 330 serves as a coordination point for Zn(2+). Residue glutamate 331 is part of the active site. 2 residues coordinate Zn(2+): histidine 334 and histidine 340. Asparagine 369 is a glycosylation site (N-linked (GlcNAc...) (complex) asparagine). Residues 392 to 407 (LRTVSIPVSGNEHLEA) constitute a propeptide that is removed on maturation. In terms of domain architecture, Disintegrin spans 397–478 (IPVSGNEHLE…ADCPRYHSHA (82 aa)). 6 disulfides stabilise this stretch: cysteine 411–cysteine 426, cysteine 413–cysteine 421, cysteine 420–cysteine 443, cysteine 434–cysteine 440, cysteine 439–cysteine 464, and cysteine 452–cysteine 471. Positions 456-458 (RGD) match the Cell attachment site motif. A propeptide spanning residues 476 to 478 (SHA) is cleaved from the precursor.

Belongs to the venom metalloproteinase (M12B) family. P-II subfamily. P-IIa sub-subfamily. In terms of assembly, monomeric (disintegrin). It depends on Zn(2+) as a cofactor. Post-translationally, glycans are composed of 4 GlcNAc, 3 Man, 2 Gal, 2 NeuAC and 1 Fuc residue. Expressed by the venom gland.

It localises to the secreted. Impairs hemostasis in the envenomed animal. Its function is as follows. Inhibits platelet aggregation induced by ADP, thrombin, platelet-activating factor and collagen. Acts by inhibiting fibrinogen interaction with platelet receptors alpha-IIb/beta-3 (ITGA2B/ITGB3). This Calloselasma rhodostoma (Malayan pit viper) protein is Zinc metalloproteinase/disintegrin.